A 161-amino-acid polypeptide reads, in one-letter code: uncharacterized protein (161 aa).

Residues 1–29 adopt a coiled-coil conformation; the sequence is MTLYDTVKELQEKLRNGEIEINTFLERLG.

This is an uncharacterized protein from Acidianus convivator (ATV).